Here is a 505-residue protein sequence, read N- to C-terminus: Sodium-coupled neutral amino acid transporter 3 (505 aa).

The segment at 27-48 is disordered; that stretch reads VPTTDTQRTEDTQHCGEGKGFL. The segment covering 33-43 has biased composition (basic and acidic residues); the sequence is QRTEDTQHCGE. Residue Asn-73 is glycosylated (N-linked (GlcNAc...) asparagine). Transmembrane regions (helical) follow at residues 82–102, 105–125, 143–163, 186–206, and 212–232; these read GILG…LFLL, VALL…IVGI, AAAL…LYII, MDGN…LALM, and LGYS…AVIY. A disulfide bond links Cys-239 and Cys-276. N-linked (GlcNAc...) asparagine glycosylation is found at Asn-247 and Asn-251. The chain crosses the membrane as a helical span at residues 288–308; it reads AYTIPIMAFAFVCHPEVLPIY. Residue Asn-324 is glycosylated (N-linked (GlcNAc...) asparagine). 5 helical membrane-spanning segments follow: residues 325–345, 367–387, 409–429, 432–452, and 472–492; these read LSIA…YLTF, ILCV…IVLF, VLIA…APNI, IFGI…PAIF, and ALCF…FIII.

This sequence belongs to the amino acid/polyamine transporter 2 family. As to expression, expressed predominantly in liver, moderately expressed in kidney and brain, and barely detectable in heart and muscle. Within liver, expressed in hepatocytes. Not detected in testis. Expressed in cells of the ganglion cell layer, in soma of some cells of the inner nuclear layer (at protein level). Expressed in the inner segments of photoreceptor cells.

It is found in the cell membrane. The protein resides in the basolateral cell membrane. The enzyme catalyses L-histidine(out) + Na(+)(out) + H(+)(in) = L-histidine(in) + Na(+)(in) + H(+)(out). It catalyses the reaction L-glutamine(out) + Na(+)(out) + H(+)(in) = L-glutamine(in) + Na(+)(in) + H(+)(out). The catalysed reaction is L-asparagine(out) + Na(+)(out) + H(+)(in) = L-asparagine(in) + Na(+)(in) + H(+)(out). Functionally, symporter that cotransports specific neutral amino acids and sodium ions, coupled to an H(+) antiporter activity. Mainly participates in the glutamate-GABA-glutamine cycle in brain where it transports L-glutamine from astrocytes in the intercellular space for the replenishment of both neurotransmitters glutamate and gamma-aminobutyric acid (GABA) in neurons and also functions as the major influx transporter in ganglion cells mediating the uptake of glutamine. The transport activity is specific for L-glutamine, L-histidine and L-asparagine. The transport is electroneutral coupled to the cotransport of 1 Na(+) and the antiport of 1 H(+). The transport is pH dependent, saturable, Li(+) tolerant and functions in both direction depending on the concentration gradients of its substrates and cotransported ions. Also mediates an amino acid-gated H(+) conductance that is not stoichiometrically coupled to the amino acid transport but which influences the ionic gradients that drive the amino acid transport. In addition, may play a role in nitrogen metabolism, amino acid homeostasis, glucose metabolism and renal ammoniagenesis. This Mus musculus (Mouse) protein is Sodium-coupled neutral amino acid transporter 3.